Here is a 160-residue protein sequence, read N- to C-terminus: Cytochrome b6-f complex subunit 4 (160 aa).

The Cytoplasmic segment spans residues 1–35; that stretch reads MATLKKPDLSDPKLRAKLAKGMGHNYYGEPAWPND. The chain crosses the membrane as a helical span at residues 36–56; the sequence is LLYVFPVVIMGTFACIVALSV. At 57-94 the chain is on the lumenal, thylakoid side; that stretch reads LDPAMVGEPADPFATPLEILPEWYLYPVFQILRSVPNK. A helical membrane pass occupies residues 95 to 115; it reads LLGVLLMASVPLGLILVPFIE. Over 116–130 the chain is Cytoplasmic; sequence NVNKFQNPFRRPVAT. Residues 131–151 traverse the membrane as a helical segment; it reads TIFLFGTLVTIWLGIGATFPL. The Lumenal, thylakoid segment spans residues 152–160; the sequence is DKTLTLGLF.

This sequence belongs to the cytochrome b family. PetD subfamily. In terms of assembly, the 4 large subunits of the cytochrome b6-f complex are cytochrome b6, subunit IV (17 kDa polypeptide, PetD), cytochrome f and the Rieske protein, while the 4 small subunits are PetG, PetL, PetM and PetN. The complex functions as a dimer.

The protein resides in the cellular thylakoid membrane. In terms of biological role, component of the cytochrome b6-f complex, which mediates electron transfer between photosystem II (PSII) and photosystem I (PSI), cyclic electron flow around PSI, and state transitions. This chain is Cytochrome b6-f complex subunit 4, found in Mastigocladus laminosus (Fischerella sp.).